The primary structure comprises 215 residues: MYGKSSTRAVLLLLGIQLTALWPIAAVEIYTSRVLEAVNGTDARLKCTFSSFAPVGDALTVTWNFRPLDGGPEQFVFYYHIDPFQPMSGRFKDRVSWDGNPERYDASILLWKLQFDDNGTYTCQVKNPPDVDGVIGEIRLSVVHTVRFSEIHFLALAIGSACALMIIIVIVVVLFQHYRKKRWAERAHKVVEIKSKEEERLNQEKKVSVYLEDTD.

The first 26 residues, 1–26 (MYGKSSTRAVLLLLGIQLTALWPIAA), serve as a signal peptide directing secretion. The 115-residue stretch at 27–141 (VEIYTSRVLE…DGVIGEIRLS (115 aa)) folds into the Ig-like V-type domain. Residues 27 to 154 (VEIYTSRVLE…TVRFSEIHFL (128 aa)) are Extracellular-facing. N-linked (GlcNAc...) asparagine glycans are attached at residues Asn-39 and Asn-118. A disulfide bridge connects residues Cys-47 and Cys-123. The helical transmembrane segment at 155 to 175 (ALAIGSACALMIIIVIVVVLF) threads the bilayer. At 176–215 (QHYRKKRWAERAHKVVEIKSKEEERLNQEKKVSVYLEDTD) the chain is on the cytoplasmic side.

The protein belongs to the myelin P0 protein family. In terms of tissue distribution, widely expressed. In fetal tissues, highest expression in the inner ear. In adult tissues, highest levels in thymus and lung.

It localises to the membrane. Functionally, mediates homophilic cell-cell adhesion. The chain is Myelin protein zero-like protein 2 (MPZL2) from Homo sapiens (Human).